A 509-amino-acid chain; its full sequence is Carboxysome shell carbonic anhydrase (509 aa).

Cysteine 170 serves as a coordination point for Zn(2+). Aspartate 172 acts as the Proton acceptor in catalysis. Histidine 238 and cysteine 249 together coordinate Zn(2+).

Belongs to the beta-class carbonic anhydrase family. CsoSCA subfamily. In terms of assembly, homodimer. Zn(2+) serves as cofactor.

It is found in the carboxysome. It carries out the reaction hydrogencarbonate + H(+) = CO2 + H2O. In terms of biological role, reversible hydration of carbon dioxide. Essential for photosynthetic carbon dioxide fixation, supplies CO(2) to RuBisCO (ribulose bisphosphate carboxylase, cbbL-cbbS) in the carboxysome. There are estimated to be 29 CsoSCA oligomers per carboxysome. This is Carboxysome shell carbonic anhydrase from Prochlorococcus marinus subsp. pastoris (strain CCMP1986 / NIES-2087 / MED4).